Consider the following 643-residue polypeptide: Threonine--tRNA ligase 1 (643 aa).

One can recognise a TGS domain in the interval 3–64; that stretch reads DMVKITFPDG…NEDGTVEIIT (62 aa). The tract at residues 245–542 is catalytic; sequence DHRKLGKELK…LIEEHKGALP (298 aa). Zn(2+) contacts are provided by Cys-338, His-389, and His-519.

It belongs to the class-II aminoacyl-tRNA synthetase family. In terms of assembly, homodimer. The cofactor is Zn(2+).

The protein localises to the cytoplasm. The catalysed reaction is tRNA(Thr) + L-threonine + ATP = L-threonyl-tRNA(Thr) + AMP + diphosphate + H(+). Catalyzes the attachment of threonine to tRNA(Thr) in a two-step reaction: L-threonine is first activated by ATP to form Thr-AMP and then transferred to the acceptor end of tRNA(Thr). Also edits incorrectly charged L-seryl-tRNA(Thr). The protein is Threonine--tRNA ligase 1 (thrS) of Bacillus subtilis (strain 168).